A 357-amino-acid polypeptide reads, in one-letter code: MTKSYSESGLMGEPQPQGPPSWTDECLSSQDEEHEADKKEDELEAMNAEEDSLRNGGEEEDEDEDLEEEEEEEEEEDDQKPKRRGPKKKKMTKARLERFKLRRMKANARERNRMHGLNAALDNLRKVVPCYSKTQKLSKIETLRLAKNYIWALSEILRSGKSPDLVSFVQTLCKGLSQPTTNLVAGCLQLNPRTFLPEQNPDMPPHLPTASASFPVHPYSYQSPGLPSPPYGTMDSSHVFHVKPPPHAYSAALEPFFESPLTDCTSPSFDGPLSPPLSINGNFSFKHEPSTEFEKNYAFTMHYPAATLAGPQSHGSIFSSGAAAPRCEIPIDNIMSFDSHSHHERVMSAQLNAIFHD.

The interval 1 to 94 is disordered; the sequence is MTKSYSESGL…GPKKKKMTKA (94 aa). Positions 58–78 are enriched in acidic residues; the sequence is EEEDEDEDLEEEEEEEEEEDD. The segment covering 81–93 has biased composition (basic residues); the sequence is PKRRGPKKKKMTK. The Nuclear localization signal motif lies at 87–93; the sequence is KKKKMTK. A bHLH domain is found at 101–153; that stretch reads LRRMKANARERNRMHGLNAALDNLRKVVPCYSKTQKLSKIETLRLAKNYIWAL. Ser-162, Ser-259, Ser-266, and Ser-274 each carry phosphoserine. Position 336 is a phosphoserine; by CaMK2 (Ser-336).

In terms of assembly, efficient DNA-binding requires dimerization with another bHLH protein. Heterodimer with TCF3/E47; the heterodimer is inhibited in presence of ID2, but not NR0B2, to E-box element. Interacts with EP300; the interaction is inhibited by NR0B2. Interacts with RREB1. Interacts with ATOH8. In terms of processing, phosphorylated by MAPK1; phosphorylation regulates heterodimerization and DNA-binding activities. Phosphorylation on Ser-266 and Ser-274 increases transactivation on the insulin promoter in glucose-stimulated insulinoma cells. Phosphorylated. In islet cells, phosphorylated on Ser-274 upon glucose stimulation; which may be required for nuclear localization. In activated neurons, phosphorylated on Ser-336 by CaMK2; which promotes dendritic growth.

The protein resides in the cytoplasm. It localises to the nucleus. Its function is as follows. Acts as a transcriptional activator: mediates transcriptional activation by binding to E box-containing promoter consensus core sequences 5'-CANNTG-3'. Associates with the p300/CBP transcription coactivator complex to stimulate transcription of the secretin gene as well as the gene encoding the cyclin-dependent kinase inhibitor CDKN1A. Contributes to the regulation of several cell differentiation pathways, like those that promote the formation of early retinal ganglion cells, inner ear sensory neurons, granule cells forming either the cerebellum or the dentate gyrus cell layer of the hippocampus, endocrine islet cells of the pancreas and enteroendocrine cells of the small intestine. Together with PAX6 or SIX3, is required for the regulation of amacrine cell fate specification. Also required for dendrite morphogenesis and maintenance in the cerebellar cortex. Associates with chromatin to enhancer regulatory elements in genes encoding key transcriptional regulators of neurogenesis. This is Neurogenic differentiation factor 1 (Neurod1) from Rattus norvegicus (Rat).